The following is a 456-amino-acid chain: ATP synthase subunit beta 1 (456 aa).

An ATP-binding site is contributed by glycine 152 to serine 159.

It belongs to the ATPase alpha/beta chains family. As to quaternary structure, F-type ATPases have 2 components, CF(1) - the catalytic core - and CF(0) - the membrane proton channel. CF(1) has five subunits: alpha(3), beta(3), gamma(1), delta(1), epsilon(1). CF(0) has three main subunits: a(1), b(2) and c(9-12). The alpha and beta chains form an alternating ring which encloses part of the gamma chain. CF(1) is attached to CF(0) by a central stalk formed by the gamma and epsilon chains, while a peripheral stalk is formed by the delta and b chains.

The protein localises to the cell membrane. The catalysed reaction is ATP + H2O + 4 H(+)(in) = ADP + phosphate + 5 H(+)(out). Its function is as follows. Produces ATP from ADP in the presence of a proton gradient across the membrane. The catalytic sites are hosted primarily by the beta subunits. This Listeria monocytogenes serotype 4b (strain F2365) protein is ATP synthase subunit beta 1.